Consider the following 495-residue polypeptide: GTPase Der (495 aa).

EngA-type G domains lie at 3-166 (PVIA…MDAE) and 208-381 (IKLA…DCST). GTP-binding positions include 9 to 16 (GRPNVGKS), 56 to 60 (DTGGI), 118 to 121 (NKTD), 214 to 221 (GRPNVGKS), 261 to 265 (DTAGV), and 326 to 329 (NKWD). Residues 382–466 (KRVGTSLLTR…PIRIQFKEGE (85 aa)) form the KH-like domain.

The protein belongs to the TRAFAC class TrmE-Era-EngA-EngB-Septin-like GTPase superfamily. EngA (Der) GTPase family. As to quaternary structure, associates with the 50S ribosomal subunit.

Its function is as follows. GTPase that plays an essential role in the late steps of ribosome biogenesis. The protein is GTPase Der of Yersinia pseudotuberculosis serotype IB (strain PB1/+).